The sequence spans 1170 residues: MNELNTVSTNSSDSTKNGGTSNSPDDMDSAAAASHAIKKRTKASRACDQCRKKKIKCDYKDEKGVCSNCQRNGDRCSFDRVPLKRGPSKGYTRSTSHPRTNEIQDHNNSRSYNTFDNSNNTLNNNTGNSGDNGINSNTVPSTPSRSNSVLLPPLTQYIPQVGGIPPSFQNPAIQSTMPAGNIGQQQFWKVPYHEFQHQRKGSIDSLQSDISVRTLNPNEQLSYNTVQQSPITNKHTNDSGNANGSVTGSGSASGSGGYWSFIRTSGLLAPTDDHNGEQTRRSSSIPSLLRNTSNSLLLGGQPQLPPPQQQSQPQAHQQKLQQGQNPYSYSQFSQQQPYNPSISSFGQFAANGFHSRQGSVASEAMSPSAPAMFTSTSTNPVNVAQQTQRPQGQQVPQFSSELDGNKRRQSAPVSVTLSTDRLNGNENNNGEINNNNGSNNSGSSKDTSQHSQESVTTPAALEASSPGSTPQRSTKKRRKSYVSKKTKPKRDSSISITSKDSAHPMTTSSTIAYGQISDVDLIDTYYEFIHVGFPIIPLNKTTLTSDLLLVNTQPISNIHEVNSYVILWFRNSLELLVRVALKQKPGGKFFDNIVGVALSPSNDNNKAGFTTATARDDAEKTRRDSHNEVQDTLEVQSVFIAALNECFQKIVDIHPKFRENNDQISPKIKVIYLSTFILLNYILAFVGYDNSFVLGMSVTIFNEFKLYKLLLFPEPDVNDVKAPVDEEANTGNGNTKTSEFEIGSESAGHMNPSNSPNSMDENISHYSVLFKRLYVLLSVFDSLQSCAFGGPKLLNISIQGSTERFFSNDLGSKWCLEQSQLRLKSVLQSLKLGELMSELTRNRISMNGNRKPGFDITNSSSLLSEYVETQPLSVAQLFCKLLIGKHNFINCLLSLYDSEAGVYSDLTLDLSSKIADSLCSLISIILQVLTLILRLNPTNSIDFNYRPPNPPANNPTVQEGPSAMGSSPVAGNLNAAPPSEGNPDFYKKLLGLKQDTGTILSDLCRGIISPFAIAILHEVYNITELVKQMPTSLISIMMTATTTQNTQDTKKSQDLVMKLSNSMNEVVQITSVLTMIKPFKIFEHELNKPIMSLTGGLSSTTRNDVMWPKSGQGLRESSVMKTLLDERRTSGTQPTTAPVAAEESRLENVALENFVSIGWKLLDDSELGWY.

Positions 1–22 (MNELNTVSTNSSDSTKNGGTSN) are enriched in polar residues. Residues 1-46 (MNELNTVSTNSSDSTKNGGTSNSPDDMDSAAAASHAIKKRTKASRA) are disordered. A DNA-binding region (zn(2)-C6 fungal-type) is located at residues 47–76 (CDQCRKKKIKCDYKDEKGVCSNCQRNGDRC). Residues 77 to 148 (SFDRVPLKRG…VPSTPSRSNS (72 aa)) form a disordered region. A compositionally biased stretch (basic and acidic residues) spans 99 to 108 (RTNEIQDHNN). A compositionally biased stretch (low complexity) spans 113 to 138 (NTFDNSNNTLNNNTGNSGDNGINSNT). Residues 139-148 (VPSTPSRSNS) are compositionally biased toward polar residues. Ser-202, Ser-205, Ser-208, and Ser-229 each carry phosphoserine. Over residues 217-234 (PNEQLSYNTVQQSPITNK) the composition is skewed to polar residues. Disordered regions lie at residues 217-254 (PNEQLSYNTVQQSPITNKHTNDSGNANGSVTGSGSASG), 269-288 (APTDDHNGEQTRRSSSIPSL), 293-343 (SNSL…PSIS), 384-506 (AQQT…HPMT), 725-757 (DEEANTGNGNTKTSEFEIGSESAGHMNPSNSPN), and 946-974 (RPPNPPANNPTVQEGPSAMGSSPVAGNLN). Residues 239–250 (SGNANGSVTGSG) are compositionally biased toward low complexity. Positions 271–280 (TDDHNGEQTR) are enriched in basic and acidic residues. Phosphoserine occurs at positions 283 and 284. Composition is skewed to low complexity over residues 293–302 (SNSLLLGGQP), 309–341 (QQSQPQAHQQKLQQGQNPYSYSQFSQQQPYNPS), and 385–397 (QQTQRPQGQQVPQ). 2 positions are modified to phosphoserine: Ser-410 and Ser-414. Polar residues predominate over residues 411–422 (APVSVTLSTDRL). Positions 424–444 (GNENNNGEINNNNGSNNSGSS) are enriched in low complexity. Residues 445–457 (KDTSQHSQESVTT) are compositionally biased toward polar residues. A compositionally biased stretch (basic residues) spans 473–488 (STKKRRKSYVSKKTKP). A compositionally biased stretch (polar residues) spans 493–506 (SISITSKDSAHPMT). At Ser-1130 the chain carries Phosphoserine.

It belongs to the EDS1/RGT1 family. Post-translationally, glucose-induced phosphorylation regulates the DNA-binding activity. Hyperphosphorylation in cells growing on high levels of glucose does prevents DNA-binding and dephosphorylation restores DNA-binding ability.

The protein localises to the nucleus. It is found in the cytoplasm. Functionally, glucose-responsive transcription factor that regulates expression of several glucose transporter (HXT) genes in response to glucose. In the absence of glucose, it functions as a transcriptional repressor, whereas high concentrations of glucose cause it to function as a transcriptional activator. In cells growing on low levels of glucose, has a neutral role, neither repressing nor activating transcription. Binds the consensus binding site sequence 5'-CGGANNA-3', of which multiple copies are present in all HXT promoters regulated by RGT1. This is Glucose transport transcription regulator RGT1 (RGT1) from Saccharomyces cerevisiae (strain YJM789) (Baker's yeast).